Reading from the N-terminus, the 540-residue chain is uncharacterized protein (540 aa).

An N-terminal signal peptide occupies residues 1–20 (MSVSYRGPRWSSFVHVSQHS).

This sequence belongs to the TP096X family.

This is an uncharacterized protein from Treponema pallidum (strain Nichols).